The chain runs to 448 residues: Glutamate--tRNA ligase (448 aa).

Positions 10–20 (PSPTGFLHIGN) match the 'HIGH' region motif. The short motif at 214 to 218 (KLSKR) is the 'KMSKS' region element. Lysine 217 is a binding site for ATP.

Belongs to the class-I aminoacyl-tRNA synthetase family. Glutamate--tRNA ligase type 1 subfamily. In terms of assembly, monomer.

The protein resides in the cytoplasm. The catalysed reaction is tRNA(Glu) + L-glutamate + ATP = L-glutamyl-tRNA(Glu) + AMP + diphosphate. Functionally, catalyzes the attachment of glutamate to tRNA(Glu) in a two-step reaction: glutamate is first activated by ATP to form Glu-AMP and then transferred to the acceptor end of tRNA(Glu). This is Glutamate--tRNA ligase from Phytoplasma australiense.